Here is a 641-residue protein sequence, read N- to C-terminus: FAD-binding monooxygenase ausB (641 aa).

The tract at residues 1 to 68 (MAIGPKPESI…DSTTNVPYSL (68 aa)) is disordered. Residues 49–68 (WLTSTDQPQPDSTTNVPYSL) are compositionally biased toward polar residues. FAD contacts are provided by residues 115-118 (TWYW), 127-128 (DI), and Tyr-133. Residue 125–127 (MCD) participates in NADP(+) binding. Residues 272 to 278 (TGSTAVQ) and 295 to 296 (RT) each bind NADP(+).

The protein belongs to the FAD-binding monooxygenase family. FAD serves as cofactor.

It catalyses the reaction protoaustinoid A + AH2 + O2 = berkeleyone A + A + H2O. It participates in secondary metabolite biosynthesis; terpenoid biosynthesis. In terms of biological role, FAD-binding monooxygenase; part of the gene cluster A that mediates the biosynthesis of the fungal meroterpenoid acetoxydehydroaustin. The first step of the pathway is the synthesis of 3,5-dimethylorsellinic acid by the polyketide synthase ausA. 3,5-dimethylorsellinic acid is then prenylated by the polyprenyl transferase ausN. Further epoxidation by the FAD-dependent monooxygenase ausM and cyclization by the probable terpene cyclase ausL lead to the formation of protoaustinoid A. Protoaustinoid A is then oxidized to spiro-lactone preaustinoid A3 by the combined action of the FAD-binding monooxygenases ausB and ausC, and the dioxygenase ausE. Acid-catalyzed keto-rearrangement and ring contraction of the tetraketide portion of preaustinoid A3 by ausJ lead to the formation of preaustinoid A4. The aldo-keto reductase ausK, with the help of ausH, is involved in the next step by transforming preaustinoid A4 into isoaustinone which is in turn hydroxylated by the P450 monooxygenase ausI to form austinolide. The cytochrome P450 monooxygenase ausG then modifies austinolide to austinol. Austinol is further acetylated to austin by the O-acetyltransferase ausP, which spontaneously changes to dehydroaustin. The cytochrome P450 monooxygenase then converts dehydroaustin is into 7-dehydrodehydroaustin. The hydroxylation catalyzed by ausR permits the second O-acetyltransferase ausQ to add an additional acetyl group to the molecule, leading to the formation of acetoxydehydroaustin. Due to genetic rearrangements of the clusters and the subsequent loss of some enzymes, the end product of the Penicillium brasilianum austinoid biosynthesis clusters is acetoxydehydroaustin. The chain is FAD-binding monooxygenase ausB from Penicillium brasilianum.